We begin with the raw amino-acid sequence, 386 residues long: Protein phosphatase methylesterase 1 (386 aa).

A disordered region spans residues 1 to 38; that stretch reads MSALEKSMHLGRLPSRPPLPGSGGSQSGAKMRMGPGRK. Position 15 is a phosphoserine (Ser15). Arg16 carries the asymmetric dimethylarginine; alternate modification. Arg16 carries the post-translational modification Omega-N-methylarginine; alternate. Catalysis depends on residues Ser156 and Asp181. The segment covering 255-265 has biased composition (acidic residues); it reads IEEEEEDEEGS. The disordered stretch occupies residues 255 to 280; it reads IEEEEEDEEGSESVNKRKKEDDMETK. The span at 268-280 shows a compositional bias: basic and acidic residues; sequence VNKRKKEDDMETK. His349 is an active-site residue.

It belongs to the AB hydrolase superfamily. Binds PPP2CA and PPP2CB. Post-translationally, phosphorylated by SIK1 following increases in intracellular sodium, leading to dissociation from the protein phosphatase 2A (PP2A) complex and subsequent dephosphorylation of sodium/potassium-transporting ATPase ATP1A1. As to expression, ubiquitous. Highly expressed in testis and brain.

The enzyme catalyses [phosphatase 2A protein]-C-terminal L-leucine methyl ester + H2O = [phosphatase 2A protein]-C-terminal L-leucine + methanol + H(+). Its function is as follows. Demethylates proteins that have been reversibly carboxymethylated. Demethylates PPP2CB (in vitro) and PPP2CA. Binding to PPP2CA displaces the manganese ion and inactivates the enzyme. The sequence is that of Protein phosphatase methylesterase 1 (Ppme1) from Mus musculus (Mouse).